The primary structure comprises 400 residues: Phosphoglycerate kinase (400 aa).

Residues 23–25 (DLN), Arg-38, 61–64 (HFGR), Arg-120, and Arg-153 each bind substrate. Residues Lys-203, Glu-325, and 355 to 358 (GGDT) each bind ATP.

The protein belongs to the phosphoglycerate kinase family. Monomer.

It localises to the cytoplasm. It carries out the reaction (2R)-3-phosphoglycerate + ATP = (2R)-3-phospho-glyceroyl phosphate + ADP. The protein operates within carbohydrate degradation; glycolysis; pyruvate from D-glyceraldehyde 3-phosphate: step 2/5. In Rhizobium leguminosarum bv. trifolii (strain WSM2304), this protein is Phosphoglycerate kinase.